We begin with the raw amino-acid sequence, 168 residues long: Transmembrane protein 31 (168 aa).

The span at 1–11 (MRLTEKSEGEQ) shows a compositional bias: basic and acidic residues. Residues 1–63 (MRLTEKSEGE…LPSRRTPTTS (63 aa)) form a disordered region. Polar residues-rich tracts occupy residues 13–22 (LKPNNSNAPN) and 35–48 (HTPARQRTQRADTQ). Positions 49–63 (PSRCRLPSRRTPTTS) are enriched in low complexity. The next 2 membrane-spanning stretches (helical) occupy residues 119–139 (IGLPIILHLFALSTLYFYKFF) and 148–168 (FFILLVLLLLLFIIVFILIFF).

It localises to the membrane. The polypeptide is Transmembrane protein 31 (TMEM31) (Homo sapiens (Human)).